Consider the following 811-residue polypeptide: MTVKVRFDKEVRDYAKGEKVKDSILKLTETALAQALENFHRRMIVIEGDTLRKAELAGILAGASARVLSGILEELMKKRLRDESEDKIEVLYATDALGEETFGRKRYEAFRKHFDVLAGSNVEVKAVTFKHTRDILGRTYDLLILDMSYDYSPNDLGRIIETVRGGGLIFILAHPFEKWKNMWTGFHKSLVTPPYTIDDVKKRFNRRLIRKFTEHDGIYIITEGGKARKKPKRSKSQARIKARKGVPIPEETLFPKELYEMALTEGQVEVLKAFEELVEGGMLVLTADRGRGKSVSVGIGAIGLALALKKRTRIVVTAPELENVQALFRFAKRALERLGFKPYVVEERGLIKELYARKIGLRYYPPADGYKKSADLYILDEAAGIHVPILHKYLNKERVVYSSTIHGYEGAGRGFSVKFLKRAREKREFKELHMDEPIRYAENDPIERWLFDVLLLDAEPVELTEEDFELIEKKEVYLEEPDLDDWFENDREDLRNFVGIYILAHYRNRPSDVALLADAPHHEARVLRLKNGKIVTAIQIAKEGGIPKKVIEKMAKGYKPRGNIIPDMMVKHHYLKEFAKLKGYRIVRIATHPDAMDRGLGSKALELLEKEAREKGLDWIGSGFGASEELVRFWVRNGFAVVHLSPARNPVSGEFTAIVLKPISERAKKLIKKANDEFRIRLTEWLGDTHRELEPEIARWLFETPFGEAVDYPVHLTEIQKKRLDAFTGKVLTYDTVVDAVKPIVKLYFLDGWMKPYLDERQIRLLIYRVLQAHSWEETAKLIDRTETFTMIEVRDIIRGLWYYYKRLLKA.

ATP contacts are provided by Gln267 and Arg439. Positions 473–662 constitute an N-acetyltransferase domain; that stretch reads KKEVYLEEPD…GEFTAIVLKP (190 aa). Acetyl-CoA is bound by residues 589–591, Glu629, and Arg636; that span reads IAT.

Belongs to the TmcA family.

The protein localises to the cytoplasm. The catalysed reaction is cytidine(34) in elongator tRNA(Met) + acetyl-CoA + ATP + H2O = N(4)-acetylcytidine(34) in elongator tRNA(Met) + ADP + phosphate + CoA + H(+). It carries out the reaction a cytidine in RNA + acetyl-CoA + ATP + H2O = an N(4)-acetylcytidine in RNA + ADP + phosphate + CoA + H(+). It catalyses the reaction a cytidine in tRNA + acetyl-CoA + ATP + H2O = an N(4)-acetylcytidine in tRNA + ADP + phosphate + CoA + H(+). The enzyme catalyses a cytidine in mRNA + acetyl-CoA + ATP + H2O = an N(4)-acetylcytidine in mRNA + ADP + phosphate + CoA + H(+). In terms of biological role, catalyzes the formation of N(4)-acetylcytidine (ac(4)C) at the wobble position of tRNA(Met), by using acetyl-CoA as an acetyl donor and ATP (or GTP). Catalyzes the formation of 267 N(4)-acetylcytidine (ac(4)C) sites in RNA, almost always on the middle C of a CCG motif. Modifications are found in rRNA, ncRNA, mRNA and tRNA. More acetylation is observed at 95 than at 75 or 85 degrees Celsius. The chain is tRNA(Met) cytidine acetyltransferase TmcA from Thermococcus sp. (strain AM4).